The primary structure comprises 395 residues: Putative carbonic anhydrase 1 (395 aa).

The first 24 residues, 1-24 (MKLQGAGCVVAAVLGALFIVNVES), serve as a signal peptide directing secretion. Positions 42–365 (ISYDVRSTIG…LNDRPVFLVR (324 aa)) constitute an Alpha-carbonic anhydrase domain. H139, H141, and H165 together coordinate Zn(2+).

This sequence belongs to the alpha-carbonic anhydrase family. Requires Zn(2+) as cofactor. Component of the acid-insoluble and acid-soluble organic matrix of calcified layers of the shell (at protein level).

The protein localises to the secreted. The catalysed reaction is hydrogencarbonate + H(+) = CO2 + H2O. In terms of biological role, reversible hydration of carbon dioxide. This chain is Putative carbonic anhydrase 1, found in Lottia gigantea (Giant owl limpet).